We begin with the raw amino-acid sequence, 872 residues long: MTDSDEDALKVDQGPSQDIPKPWVIPAPKGFLQHIFGTSQVFQSICDVKPKVTGLTVPLKVREYYSRGQQCLEQADWETAVLFFSRALHLDPQLVDFYALRAEAYLQLCDFSSAAQNLRRAYSLQQDNCKHLERLTFVLYLQGQCLFEQCAFLDALNVFSHAAELQPEKACFRYRCMACLLALEQHPACLSLITEELKQDTTNADVYILRARLYNFLQKPHLCYRDLHGALLLNPKHPQARMLLQKMVAQAQQARQDAGILAVQGRLQHALQRINCAIENNPLDPSFFLFRGTMYRRLQEFDGAVEDFLKVLDMVTEDQEDIMRQAQRQLLLTYNDFAVHCYRQGAYQEGVLLLNKALRDEQQEKGLYINRGDCFFQLGNLAFAEADYQQALALSPQDEGANTRMGLLQEKMGFCEQKHRQFQKAEDHFSTAIRHNPQKAQYYLYRAKSRQLLQNIFGARQDVATVLLLNPKQPKLSLLMTNLFPGMSVEEVLSTQIAHLARLQLERMVEGSLQAGGPQGIVGMLKQWELERQKALALQHSWKQGEPLIETSEKLQATPEIPQVEPGSSEGQAEAPKEEEEKEEEEQKEEEEQKKEEKKEEKKPKLTPSKVASLSESYLDQTSLASSMSFRTTCTSETETSAICQEYRSTSATAMTFSDSSLLKTQSSDSGNNREALSHGPRKIKDIQGQRQSLSKTQATQSQRQNFSKTKAAAHRRNSSKTKATQGQGRRSSKTEATQGQRQSSSEIETSQGPRQEPSKTKTTRSPRQRPRKVKAARGRSWRPSKLDATQGRRRGLLRSSTKTEAFYDSNWSLSKTEDVQGQGQRTSKAEAAQGKSRGMSSTSSKAESTWGPSPSVSKTEVGQDLTYYEVL.

The segment at 1 to 20 is disordered; sequence MTDSDEDALKVDQGPSQDIP. TPR repeat units lie at residues 61 to 94, 96 to 128, 136 to 169, 251 to 284, 285 to 318, 331 to 364, 365 to 398, and 406 to 439; these read VREYYSRGQQCLEQADWETAVLFFSRALHLDPQL, DFYALRAEAYLQLCDFSSAAQNLRRAYSLQQDN, TFVLYLQGQCLFEQCAFLDALNVFSHAAELQPEK, AQQARQDAGILAVQGRLQHALQRINCAIENNPLD, PSFFLFRGTMYRRLQEFDGAVEDFLKVLDMVTED, LLTYNDFAVHCYRQGAYQEGVLLLNKALRDEQQE, KGLYINRGDCFFQLGNLAFAEADYQQALALSPQD, and GLLQEKMGFCEQKHRQFQKAEDHFSTAIRHNPQK. Disordered stretches follow at residues 557 to 640 and 653 to 872; these read ATPE…ETET and TAMT…YEVL. A compositionally biased stretch (acidic residues) spans 577-590; sequence KEEEEKEEEEQKEE. The span at 591 to 604 shows a compositional bias: basic and acidic residues; the sequence is EEQKKEEKKEEKKP. 4 stretches are compositionally biased toward polar residues: residues 610-640, 653-675, 689-709, and 721-754; these read KVASLSESYLDQTSLASSMSFRTTCTSETET, TAMTFSDSSLLKTQSSDSGNNRE, GQRQSLSKTQATQSQRQNFSK, and KTKATQGQGRRSSKTEATQGQRQSSSEIETSQGP. Residues 762–783 show a composition bias toward basic residues; sequence KTTRSPRQRPRKVKAARGRSWR. 2 stretches are compositionally biased toward polar residues: residues 799 to 827 and 839 to 861; these read RSSTKTEAFYDSNWSLSKTEDVQGQGQRT and GMSSTSSKAESTWGPSPSVSKTE.

The sequence is that of Tetratricopeptide repeat protein 16 (TTC16) from Macaca fascicularis (Crab-eating macaque).